The primary structure comprises 476 residues: uncharacterized protein (476 aa).

The stretch at 147-204 (DVRLAELRRRRAELEAEIAAVEAGDIAVLDPTAVRDRYQQLSTTARELLSDFREVEEN) forms a coiled coil.

This is an uncharacterized protein from Mycolicibacterium smegmatis (strain ATCC 700084 / mc(2)155) (Mycobacterium smegmatis).